Reading from the N-terminus, the 1943-residue chain is Protocadherin-15 (1943 aa).

Residues 1 to 26 (MFLQFAVWKCLPHGILIASLLVVSWG) form the signal peptide. Topologically, residues 27–1381 (QYDDDWQYED…GESLGYTEGA (1355 aa)) are extracellular. Cysteines 37 and 125 form a disulfide. 11 consecutive Cadherin domains span residues 45–152 (PATI…SPTF), 153–270 (KHES…GPMF), 283–400 (RPLT…SPYF), 401–514 (TMPS…TPTF), 515–621 (PEIS…PPRF), 622–722 (PQLM…APVF), 724–824 (PYLP…SPVF), 825–931 (TNST…PPVF), 932–1040 (SKRI…IPRF), 1042–1149 (QEEY…PPVF), and 1150–1264 (QKKF…PPTL). Residues Asn-57, Asn-102, and Asn-206 are each glycosylated (N-linked (GlcNAc...) asparagine). N-linked (GlcNAc...) asparagine glycosylation is found at Asn-424, Asn-564, Asn-667, Asn-729, Asn-773, Asn-826, and Asn-856. N-linked (GlcNAc...) asparagine glycosylation is found at Asn-1069, Asn-1089, and Asn-1180. A helical transmembrane segment spans residues 1382-1402 (LLALAFIIILCCIPAILVVLV). Residues 1403 to 1943 (SYRQFKVRQA…VQPHSQSTSL (541 aa)) are Cytoplasmic-facing. Disordered stretches follow at residues 1425–1453 (PAAK…AHLY), 1475–1533 (GNNS…STHN), and 1714–1865 (ILNS…EPHR). Over residues 1431-1449 (APVPAAPAPPPPPPPPPPG) the composition is skewed to pro residues. Basic and acidic residues-rich tracts occupy residues 1480–1489 (PEDRSSHRDG) and 1498–1509 (ESHEPAHVEGPL). Pro residues-rich tracts occupy residues 1742 to 1760 (PHPP…PRPP) and 1769 to 1779 (PLSPPNPPPPQ). A compositionally biased stretch (low complexity) spans 1784-1795 (SLPISTPPTSSL). Residues 1796–1821 (PLPPPLSLPPPPRPPAPRLFPQPPST) are compositionally biased toward pro residues. Over residues 1822–1834 (SIPSTDSISAPAA) the composition is skewed to low complexity. Residues 1846 to 1858 (TTSTTQPPASNPQ) show a composition bias toward polar residues.

As to quaternary structure, antiparallel heterodimer with CDH23. Found in a complex with TMIE and LHFPL5. Interacts with LHFPL5/TMHS; this interaction is required for efficient localization to hair bundles. Interacts with MYO7A. Interacts with USH1G; this interaction may recruit USH1G to the plasma membrane. Interacts with TOMT. Isoforms CD1 and CD3 interact with TMC1 (via N-terminus) and TMC2 (via N-terminus). Interacts with PIEZO1. As to expression, expressed in brain and sensory epithelium of the developing inner ear. Expressed in the retina, in the photoreceptor inner segments, the outer plexiform layer, the inner nuclei layer and the ganglion cell layer and, more diffusely in the inner plexiform layer (at protein level). Not detected in the retinal pigment epithelium (at protein level). Expressed in the spleen, dorsal root ganglion, dorsal aspect of neural tube, floor plate and ependymal cells adjacent to the neural canal.

The protein localises to the cell membrane. It localises to the secreted. Functionally, calcium-dependent cell-adhesion protein. Required for inner ear neuroepithelial cell elaboration and cochlear function. Probably involved in the maintenance of normal retinal function. This Mus musculus (Mouse) protein is Protocadherin-15 (Pcdh15).